We begin with the raw amino-acid sequence, 571 residues long: Sulfite reductase [NADPH] hemoprotein beta-component (571 aa).

[4Fe-4S] cluster contacts are provided by cysteine 435, cysteine 441, cysteine 480, and cysteine 484. Cysteine 484 contributes to the siroheme binding site.

Belongs to the nitrite and sulfite reductase 4Fe-4S domain family. As to quaternary structure, alpha(8)-beta(8). The alpha component is a flavoprotein, the beta component is a hemoprotein. Siroheme serves as cofactor. Requires [4Fe-4S] cluster as cofactor.

The catalysed reaction is hydrogen sulfide + 3 NADP(+) + 3 H2O = sulfite + 3 NADPH + 4 H(+). Its pathway is sulfur metabolism; hydrogen sulfide biosynthesis; hydrogen sulfide from sulfite (NADPH route): step 1/1. Its function is as follows. Component of the sulfite reductase complex that catalyzes the 6-electron reduction of sulfite to sulfide. This is one of several activities required for the biosynthesis of L-cysteine from sulfate. The protein is Sulfite reductase [NADPH] hemoprotein beta-component of Musicola paradisiaca (strain Ech703) (Dickeya paradisiaca).